The chain runs to 931 residues: ORF4 polyprotein (931 aa).

In terms of processing, proteolytic processing of ORF4 polyprotein yields the VP4a, VP4b and VP4c capsid proteins.

It is found in the virion. In terms of biological role, ORF4 polyprotein codes for VP4a, VP4b, and VP4c, three of the four proteins that self-assemble to form the icosahedral capsid. The capsid is made of VP3 (coded by ORF3), VP4a, VP4b and VP4c. This Drosophila melanogaster (Fruit fly) protein is ORF4 polyprotein.